A 336-amino-acid polypeptide reads, in one-letter code: Inositol 2-dehydrogenase (336 aa).

Belongs to the Gfo/Idh/MocA family. Homotetramer.

It catalyses the reaction myo-inositol + NAD(+) = scyllo-inosose + NADH + H(+). Its function is as follows. Involved in the oxidation of myo-inositol (MI) to 2-keto-myo-inositol (2KMI or 2-inosose). The protein is Inositol 2-dehydrogenase of Pseudomonas savastanoi pv. phaseolicola (strain 1448A / Race 6) (Pseudomonas syringae pv. phaseolicola (strain 1448A / Race 6)).